The chain runs to 192 residues: uncharacterized protein (192 aa).

Residues 29-160 (RRQAAVLIPV…PLDIYRRGDS (132 aa)) form the Nudix hydrolase domain. The Nudix box signature appears at 67 to 89 (GAVDSSDASLIAAALREAQEEVA). Positions 83 and 87 each coordinate Mg(2+).

This sequence belongs to the Nudix hydrolase family. PCD1 subfamily. It depends on Mn(2+) as a cofactor. Mg(2+) is required as a cofactor.

Its function is as follows. Probably mediates the hydrolysis of some nucleoside diphosphate derivatives. This is an uncharacterized protein from Citrobacter koseri (strain ATCC BAA-895 / CDC 4225-83 / SGSC4696).